We begin with the raw amino-acid sequence, 330 residues long: Solute-binding protein NAS141_03721 (330 aa).

An N-terminal signal peptide occupies residues 1–27 (MSFFTKTAQLVSGAAVAATLFTATAQA). Residues glutamate 75, asparagine 97, arginine 153, arginine 173, tyrosine 196, 213–214 (NE), and arginine 240 contribute to the alpha-D-mannuronate site. Residues glutamate 75, asparagine 97, arginine 153, arginine 173, tyrosine 196, 213–214 (NE), and arginine 240 each bind alpha-D-taluronate.

It belongs to the bacterial solute-binding protein 7 family. The complex is comprised of an extracytoplasmic solute-binding protein and a heteromeric permease formed by two transmembrane proteins.

It localises to the periplasm. Solute-binding protein that binds D-mannuronate and D-taluronate (in vitro). Probably part of a tripartite ATP-independent periplasmic (TRAP) transport system that mediates solute transport into the cytoplasm. The polypeptide is Solute-binding protein NAS141_03721 (Sulfitobacter sp. (strain NAS-14.1)).